We begin with the raw amino-acid sequence, 381 residues long: Alkanesulfonate monooxygenase (381 aa).

Belongs to the SsuD family. In terms of assembly, homotetramer.

The enzyme catalyses an alkanesulfonate + FMNH2 + O2 = an aldehyde + FMN + sulfite + H2O + 2 H(+). Functionally, catalyzes the desulfonation of aliphatic sulfonates. This Escherichia coli O1:K1 / APEC protein is Alkanesulfonate monooxygenase.